We begin with the raw amino-acid sequence, 177 residues long: Peptide methionine sulfoxide reductase MsrA 2 (177 aa).

The active site involves C12.

The protein belongs to the MsrA Met sulfoxide reductase family.

The enzyme catalyses L-methionyl-[protein] + [thioredoxin]-disulfide + H2O = L-methionyl-(S)-S-oxide-[protein] + [thioredoxin]-dithiol. It catalyses the reaction [thioredoxin]-disulfide + L-methionine + H2O = L-methionine (S)-S-oxide + [thioredoxin]-dithiol. Has an important function as a repair enzyme for proteins that have been inactivated by oxidation. Catalyzes the reversible oxidation-reduction of methionine sulfoxide in proteins to methionine. In Staphylococcus aureus (strain NCTC 8325 / PS 47), this protein is Peptide methionine sulfoxide reductase MsrA 2 (msrA2).